The following is a 342-amino-acid chain: N-acetyl-gamma-glutamyl-phosphate reductase (342 aa).

Cys-149 is a catalytic residue.

This sequence belongs to the NAGSA dehydrogenase family. Type 1 subfamily.

It is found in the cytoplasm. It catalyses the reaction N-acetyl-L-glutamate 5-semialdehyde + phosphate + NADP(+) = N-acetyl-L-glutamyl 5-phosphate + NADPH + H(+). It participates in amino-acid biosynthesis; L-arginine biosynthesis; N(2)-acetyl-L-ornithine from L-glutamate: step 3/4. Catalyzes the NADPH-dependent reduction of N-acetyl-5-glutamyl phosphate to yield N-acetyl-L-glutamate 5-semialdehyde. This is N-acetyl-gamma-glutamyl-phosphate reductase from Ruegeria pomeroyi (strain ATCC 700808 / DSM 15171 / DSS-3) (Silicibacter pomeroyi).